Reading from the N-terminus, the 525-residue chain is Chromosomal replication initiator protein DnaA (525 aa).

Positions 1–71 (MNDFWQHCSA…ADLAREFWNT (71 aa)) are domain I, interacts with DnaA modulators. Residues 71–188 (TPIEVQFVLD…GEADSMYERS (118 aa)) form a domain II region. A disordered region spans residues 160–182 (AAAGRRTWRPGPGAAPANGGEAD). Over residues 169 to 181 (PGPGAAPANGGEA) the composition is skewed to low complexity. The domain III, AAA+ region stretch occupies residues 189–405 (KLNPVLTFDN…GALRKILAYS (217 aa)). Residues Gly-233, Gly-235, Lys-236, and Thr-237 each contribute to the ATP site. The domain IV, binds dsDNA stretch occupies residues 406–525 (KFHGREISIE…LHVLEQTLKG (120 aa)).

It belongs to the DnaA family. As to quaternary structure, oligomerizes as a right-handed, spiral filament on DNA at oriC.

The protein resides in the cytoplasm. In terms of biological role, plays an essential role in the initiation and regulation of chromosomal replication. ATP-DnaA binds to the origin of replication (oriC) to initiate formation of the DNA replication initiation complex once per cell cycle. Binds the DnaA box (a 9 base pair repeat at the origin) and separates the double-stranded (ds)DNA. Forms a right-handed helical filament on oriC DNA; dsDNA binds to the exterior of the filament while single-stranded (ss)DNA is stabiized in the filament's interior. The ATP-DnaA-oriC complex binds and stabilizes one strand of the AT-rich DNA unwinding element (DUE), permitting loading of DNA polymerase. After initiation quickly degrades to an ADP-DnaA complex that is not apt for DNA replication. Binds acidic phospholipids. The protein is Chromosomal replication initiator protein DnaA of Burkholderia cenocepacia (strain ATCC BAA-245 / DSM 16553 / LMG 16656 / NCTC 13227 / J2315 / CF5610) (Burkholderia cepacia (strain J2315)).